The following is a 662-amino-acid chain: Glutathione hydrolase 7 (662 aa).

Over 1-106 the chain is Cytoplasmic; that stretch reads MAAENEASQE…AAECSCRQDG (106 aa). Phosphoserine occurs at positions 17, 72, 79, and 83. The segment at 26-90 is disordered; it reads SFPRLPEDEP…DGSPLRETRK (65 aa). Residues 72–83 show a composition bias toward low complexity; that stretch reads SSSSEMGSQDGS. Residues 107–127 traverse the membrane as a helical; Signal-anchor for type II membrane protein segment; the sequence is LTVIVTACLTFATGVTVALVM. Topologically, residues 128–662 are extracellular; that stretch reads QIYFGDPQIF…SLDATGASIL (535 aa). 9 N-linked (GlcNAc...) asparagine glycosylation sites follow: Asn198, Asn267, Asn283, Asn330, Asn353, Asn394, Asn519, Asn523, and Asn586.

The protein belongs to the gamma-glutamyltransferase family. As to quaternary structure, heterodimer composed of the light and heavy chains. The active site is located in the light chain. Cleaved by autocatalysis into a large and a small subunit and the autocatalytic cleavage is essential to the functional activation of the enzyme.

The protein resides in the membrane. It carries out the reaction an N-terminal (5-L-glutamyl)-[peptide] + an alpha-amino acid = 5-L-glutamyl amino acid + an N-terminal L-alpha-aminoacyl-[peptide]. The catalysed reaction is glutathione + H2O = L-cysteinylglycine + L-glutamate. The enzyme catalyses an S-substituted glutathione + H2O = an S-substituted L-cysteinylglycine + L-glutamate. Its pathway is sulfur metabolism; glutathione metabolism. In terms of biological role, hydrolyzes and transfers gamma-glutamyl moieties from glutathione and other gamma-glutamyl compounds to acceptors. The sequence is that of Glutathione hydrolase 7 from Rattus norvegicus (Rat).